The following is a 63-amino-acid chain: Large ribosomal subunit protein bL28 (63 aa).

This sequence belongs to the bacterial ribosomal protein bL28 family.

This Clostridium botulinum (strain ATCC 19397 / Type A) protein is Large ribosomal subunit protein bL28.